The sequence spans 124 residues: Holo-[acyl-carrier-protein] synthase (124 aa).

D8 and E56 together coordinate Mg(2+).

Belongs to the P-Pant transferase superfamily. AcpS family. Mg(2+) is required as a cofactor.

It is found in the cytoplasm. It catalyses the reaction apo-[ACP] + CoA = holo-[ACP] + adenosine 3',5'-bisphosphate + H(+). Transfers the 4'-phosphopantetheine moiety from coenzyme A to a Ser of acyl-carrier-protein. This Clostridium acetobutylicum (strain ATCC 824 / DSM 792 / JCM 1419 / IAM 19013 / LMG 5710 / NBRC 13948 / NRRL B-527 / VKM B-1787 / 2291 / W) protein is Holo-[acyl-carrier-protein] synthase.